The sequence spans 229 residues: Uracil-DNA glycosylase (229 aa).

Aspartate 64 acts as the Proton acceptor in catalysis.

The protein belongs to the uracil-DNA glycosylase (UDG) superfamily. UNG family.

Its subcellular location is the cytoplasm. The enzyme catalyses Hydrolyzes single-stranded DNA or mismatched double-stranded DNA and polynucleotides, releasing free uracil.. Excises uracil residues from the DNA which can arise as a result of misincorporation of dUMP residues by DNA polymerase or due to deamination of cytosine. This is Uracil-DNA glycosylase from Klebsiella pneumoniae subsp. pneumoniae (strain ATCC 700721 / MGH 78578).